A 437-amino-acid polypeptide reads, in one-letter code: MQLPRWWELGDPCAWTGQGRGTRRMSPATTGTFLLTVYSIFSKVHSDRNVYPSAGVLFVHVLEREYFKGEFPPYPKPGEISNDPITFNTNLMGYPDRPGWLRYIQRTPYSDGVLYGSPTAENVGKPTIIEITAYNRRTFETARHNLIINIMSAEDFPLPYQAEFFIKNMNVEEMLASEVLGDFLGAVKNVWQPERLNAINITSALDRGGRVPLPINDLKEGVYVMVGADVPFSSCLREVENPQNQLRCSQEMEPVITCDKKFRTQFYIDWCKISLVDKTKQVSTYQEVIRGEGILPDGGEYKPPSDSLKSRDYYTDFLITLAVPSAVALVLFLILAYIMCCRREGVEKRNMQTPDIQLVHHSAIQKSTKELRDMSKNREIAWPLSTLPVFHPVTGEIIPPLHTDNYDSTNMPLMQTQQNLPHQTQIPQQQTTGKWYP.

At Met1–Phe317 the chain is on the extracellular side. Asn200 is a glycosylation site (N-linked (GlcNAc...) asparagine). The chain crosses the membrane as a helical span at residues Leu318–Ile338. The Cytoplasmic portion of the chain corresponds to Met339–Pro437.

Belongs to the sarcoglycan alpha/epsilon family. N-glycosylated. Post-translationally, ubiquitinated, leading to its degradation by the proteasome. Ubiquitous.

The protein localises to the cell membrane. The protein resides in the sarcolemma. Its subcellular location is the cytoplasm. It is found in the cytoskeleton. It localises to the cell projection. The protein localises to the dendrite. The protein resides in the golgi apparatus. Its function is as follows. Component of the sarcoglycan complex, a subcomplex of the dystrophin-glycoprotein complex which forms a link between the F-actin cytoskeleton and the extracellular matrix. This Homo sapiens (Human) protein is Epsilon-sarcoglycan (SGCE).